The chain runs to 519 residues: MDTLLSLQAVPAAAAIGGPVVAIGGITLFFIREYVKDQRKKSSSFPPPPKVPGLPVIGNLLQLKEKKPHKTFTKWSEKYGPIYSIRTGANTMIVLNTNDVAKEAMITKYSSISTRKLSKALTILTSDKSIVAMSDYNEFYKAAKRHLLTSTLGPTAQKRHRVHRNLMINNICDQFLAHAKMYPSEAVNFRKIFQSELFGLSMKQAIGEDVESIYVEDLDTTLSRQEMFKILVVDPMEGAIDVDWRDFFPYLKWIPNQHFENKIQQMHFHREAVMKALIEQQKKRIASGKAINCYLDHLLSEAADTLSEQQILMLLWEAIIEASDTTLVTTEWAMYELSKDPKRQNYLLSEIQNACGFDQLNEEKLCRLPYLAAIFQETLRKHSPVPVVPLRYVHEETQLGGYTIPEGSEIAINIYGCNMDKNVWDSPEEWRPERFVFGKDDTTELHKTMAFGGGKRVCAGALQAMTISCIAIGRLVQELEWRLGDGEEANVDTLGLTTHKLHPLQTIIKPRLRDRVCVS.

Over 1 to 10 (MDTLLSLQAV) the chain is Chloroplast intermembrane. Residues 11–31 (PAAAAIGGPVVAIGGITLFFI) form a helical membrane-spanning segment. Residues 32-519 (REYVKDQRKK…PRLRDRVCVS (488 aa)) lie on the Cytoplasmic side of the membrane. Cys-458 contacts heme.

It belongs to the cytochrome P450 family. Requires heme as cofactor.

The protein localises to the plastid. It is found in the chloroplast outer membrane. It catalyses the reaction ent-kaur-16-ene + 3 reduced [NADPH--hemoprotein reductase] + 3 O2 = ent-kaur-16-en-19-oate + 3 oxidized [NADPH--hemoprotein reductase] + 4 H2O + 4 H(+). The protein operates within plant hormone biosynthesis; gibberellin biosynthesis. In terms of biological role, catalyzes three successive oxidations of the 4-methyl group of ent-kaurene giving kaurenoic acid, a key step in gibberellins (GAs) biosynthesis. GAs, which are involved many processes, including stem elongation, play a central role in plant development. In Salvia miltiorrhiza (Chinese sage), this protein is Ent-kaurene oxidase.